The chain runs to 164 residues: V-type proton ATPase subunit c3 (164 aa).

The Lumenal portion of the chain corresponds to 1-11 (MSTFSGDETAP). A helical membrane pass occupies residues 12–32 (FFGFLGAAAALVFSCMGAAYG). Topologically, residues 33–54 (TAKSGVGVASMGVMRPELVMKS) are cytoplasmic. Residues 55–75 (IVPVVMAGVLGIYGLIIAVII) traverse the membrane as a helical segment. Residues 76–94 (STGINPKAKSYYLFDGYAH) lie on the Lumenal side of the membrane. Residues 95–116 (LSSGLACGLAGLSAGMAIGIVG) form a helical membrane-spanning segment. The Cytoplasmic segment spans residues 117-128 (DAGVRANAQQPK). The helical transmembrane segment at 129-154 (LFVGMILILIFAEALALYGLIVGIIL) threads the bilayer. The Lumenal segment spans residues 155-164 (SSRAGQSRAE).

Belongs to the V-ATPase proteolipid subunit family. As to quaternary structure, V-ATPase is a heteromultimeric enzyme composed of a peripheral catalytic V1 complex (components A to H) attached to an integral membrane V0 proton pore complex (components: a, c, c'', d and e). The proteolipid components c and c'' are present as a hexameric ring that forms the proton-conducting pore. In terms of tissue distribution, expressed in leaf, root, flower and silique.

Its subcellular location is the vacuole membrane. In terms of biological role, proton-conducting pore forming subunit of the membrane integral V0 complex of vacuolar ATPase. V-ATPase is responsible for acidifying a variety of intracellular compartments in eukaryotic cells. The sequence is that of V-type proton ATPase subunit c3 (VHA-c3) from Arabidopsis thaliana (Mouse-ear cress).